A 331-amino-acid polypeptide reads, in one-letter code: Acyl-CoA desaturase 1 (331 aa).

At 1 to 46 (MTEVDDGCGGRLRGSVLLEDECDLKQECETPTHSLVQGRDPPVVVV) the chain is on the cytoplasmic side. The chain crosses the membrane as a helical span at residues 47–67 (WRNVVLMSVLHTAAVYGLVLL). N49 lines the substrate pocket. Topologically, residues 68–71 (PSAS) are lumenal. A helical transmembrane segment spans residues 72–90 (AYTLLAFCFVSSALGITAG). The Cytoplasmic portion of the chain corresponds to 91-189 (AHRLWSHRSY…DRVVMFQRRF (99 aa)). Fe cation contacts are provided by H92 and H97. Residues 92–97 (HRLWSH) carry the Histidine box-1 motif. Positions 120, 127, and 128 each coordinate substrate. Positions 129, 132, and 133 each coordinate Fe cation. A Histidine box-2 motif is present at residues 129–133 (HRVHH). K161 contributes to the substrate binding site. Residues 190–209 (YKHSVVVMCFLIPAMLPWFL) form a helical membrane-spanning segment. Residues 210–213 (WAES) are Lumenal-facing. A helical transmembrane segment spans residues 214-235 (LWVGYFVPVLLRYALVLNATWL). W234 lines the substrate pocket. Residues 236 to 331 (VNSAAHMWGN…RTGDGSHRSG (96 aa)) are Cytoplasmic-facing. Residues H241, H270, H273, and H274 each coordinate Fe cation. Positions 270-274 (HNYHH) match the Histidine box-3 motif.

The protein belongs to the fatty acid desaturase type 1 family. It depends on Fe(2+) as a cofactor. In terms of tissue distribution, expression is highest in liver, followed by brain and intestine, and lowest in spleen. Also expressed in heart, gill and muscle.

The protein resides in the endoplasmic reticulum membrane. The enzyme catalyses octadecanoyl-CoA + 2 Fe(II)-[cytochrome b5] + O2 + 2 H(+) = (9Z)-octadecenoyl-CoA + 2 Fe(III)-[cytochrome b5] + 2 H2O. In terms of biological role, stearoyl-CoA desaturase that utilizes O(2) and electrons from reduced cytochrome b5 to introduce the first double bond into saturated fatty acyl-CoA substrates. Catalyzes the insertion of a cis double bond at the delta-9 position into fatty acyl-CoA substrates including palmitoyl-CoA and stearoyl-CoA. Contributes to the biosynthesis of membrane phospholipids, cholesterol esters and triglycerides. This is Acyl-CoA desaturase 1 from Tachysurus fulvidraco (Yellow catfish).